Reading from the N-terminus, the 547-residue chain is Probable ABC transporter periplasmic-binding protein SapA (547 aa).

Positions 1–21 (MRQVLSSLLVIAGLVSGQAIA) are cleaved as a signal peptide.

Belongs to the bacterial solute-binding protein 5 family.

It localises to the periplasm. Its function is as follows. Not part of a putrescine export system. Very similar to a S.typhimurium protein implicated in antimicrobial peptide resistance, but the SapBCDF operon in E.coli is implicated in putrescine export. This Escherichia coli (strain K12) protein is Probable ABC transporter periplasmic-binding protein SapA (sapA).